A 215-amino-acid chain; its full sequence is Adenylate kinase (215 aa).

Residue 10-15 (GTGKGT) participates in ATP binding. Residues 30-59 (STGDMLRESVVLKNKIGMIIKNIIEEGKLV) are NMP. Residues Thr31, Arg36, 57–59 (KLV), 85–88 (GFPR), and Gln92 contribute to the AMP site. The segment at 122-159 (GRRIHIQSGRIYHVKFKPPKIKDKDDLTGQTLITRKDD) is LID. ATP contacts are provided by residues Arg123 and 132 to 133 (IY). 2 residues coordinate AMP: Arg156 and Arg167. Leu200 provides a ligand contact to ATP.

The protein belongs to the adenylate kinase family. As to quaternary structure, monomer.

The protein resides in the cytoplasm. The catalysed reaction is AMP + ATP = 2 ADP. It participates in purine metabolism; AMP biosynthesis via salvage pathway; AMP from ADP: step 1/1. Catalyzes the reversible transfer of the terminal phosphate group between ATP and AMP. Plays an important role in cellular energy homeostasis and in adenine nucleotide metabolism. The sequence is that of Adenylate kinase from Buchnera aphidicola subsp. Acyrthosiphon pisum (strain 5A).